Consider the following 402-residue polypeptide: 1-deoxy-D-xylulose 5-phosphate reductoisomerase (402 aa).

NADPH contacts are provided by Thr-27, Gly-28, Ser-29, Ile-30, Gly-53, Lys-54, Asn-55, and Asn-140. Lys-141 serves as a coordination point for 1-deoxy-D-xylulose 5-phosphate. Residue Glu-142 participates in NADPH binding. Asp-166 provides a ligand contact to Mn(2+). 1-deoxy-D-xylulose 5-phosphate contacts are provided by Ser-167, Glu-168, Ser-192, and His-215. A Mn(2+)-binding site is contributed by Glu-168. Gly-221 lines the NADPH pocket. Residues Ser-228, Asn-233, Lys-234, and Glu-237 each contribute to the 1-deoxy-D-xylulose 5-phosphate site. Position 237 (Glu-237) interacts with Mn(2+).

The protein belongs to the DXR family. Requires Mg(2+) as cofactor. The cofactor is Mn(2+).

It carries out the reaction 2-C-methyl-D-erythritol 4-phosphate + NADP(+) = 1-deoxy-D-xylulose 5-phosphate + NADPH + H(+). The protein operates within isoprenoid biosynthesis; isopentenyl diphosphate biosynthesis via DXP pathway; isopentenyl diphosphate from 1-deoxy-D-xylulose 5-phosphate: step 1/6. In terms of biological role, catalyzes the NADPH-dependent rearrangement and reduction of 1-deoxy-D-xylulose-5-phosphate (DXP) to 2-C-methyl-D-erythritol 4-phosphate (MEP). The chain is 1-deoxy-D-xylulose 5-phosphate reductoisomerase from Lawsonia intracellularis (strain PHE/MN1-00).